The primary structure comprises 550 residues: MNHVPSDQSFYIESEDEDDRKDYVEEDGGSHSDSSDDVYDENQAHIKPSSYTTAWPQSYRQSIDLYSSVPSPGIGFLGNNSMTRFGSSFLSSGLIRRHTPESLPTVTKPLLEEQADEQALPKHRLSSQGLLSPIPSRRGSMRKDEKSSMVSHEIPMSRNSSYGQAVLNGLNVLCGVGILSTPYAAKEGGWLGLMILFVYGLLSFYTGILLRYCLDSESDLETYPDIGQAAFGTTGRIFVSIVLYLELYACCVEYIILESDNLSSLYPNAALSIGGFQLDARHLFALLTTLAVLPTVWLRDLSVLSYISAGGVIASVLVVLCLFWIGLVDEVGIHSKGTTLNLSTLPVAIGLYGYCYSGHAVFPNIYTSMAKPSQYPAVLLTCFGICTLMYAGVAVMGYTMFGESTQSQFTLNLPQDLIATKIAVWTTVVNPFTKYALTISPVAMSLEELIPSRHIRSHWYAIGIRTLLVFSTLLVGLAIPFFGLVMSLIGSLLTMLVTLILPPACFLSIVRRKVTPTQMMLCVLIIIVGAISSVIGSYSALSKIVEKLTN.

A compositionally biased stretch (polar residues) spans 1–11; the sequence is MNHVPSDQSFY. Disordered stretches follow at residues 1-44 and 128-148; these read MNHV…ENQA and QGLLSPIPSRRGSMRKDEKSS. The span at 20 to 34 shows a compositional bias: basic and acidic residues; the sequence is RKDYVEEDGGSHSDS. 11 helical membrane-spanning segments follow: residues 165 to 185, 190 to 210, 237 to 257, 283 to 303, 307 to 327, 342 to 362, 377 to 397, 422 to 442, 462 to 484, 488 to 510, and 521 to 541; these read AVLNGLNVLCGVGILSTPYAA, WLGLMILFVYGLLSFYTGILL, IFVSIVLYLELYACCVEYIIL, LFALLTTLAVLPTVWLRDLSV, ISAGGVIASVLVVLCLFWIGL, LSTLPVAIGLYGYCYSGHAVF, AVLLTCFGICTLMYAGVAVMG, IAVWTTVVNPFTKYALTISPV, IGIRTLLVFSTLLVGLAIPFFGL, LIGSLLTMLVTLILPPACFLSIV, and LCVLIIIVGAISSVIGSYSAL.

Belongs to the amino acid/polyamine transporter 2 family. Amino acid/auxin permease (AAAP) (TC 2.A.18.5) subfamily.

The protein localises to the membrane. This is Amino acid transporter AVT1C from Arabidopsis thaliana (Mouse-ear cress).